The primary structure comprises 306 residues: Foldase protein PrsA (306 aa).

Residues 1–20 form the signal peptide; it reads MRRKIALFLALIFVGVSLVS. Cys-21 is lipidated: N-palmitoyl cysteine. A lipid anchor (S-diacylglycerol cysteine) is attached at Cys-21. Residues 165–255 form the PpiC domain; it reads FEVMRARHIL…YGYHIIKSEG (91 aa).

The protein belongs to the PrsA family.

The protein resides in the cell membrane. It catalyses the reaction [protein]-peptidylproline (omega=180) = [protein]-peptidylproline (omega=0). In terms of biological role, plays a major role in protein secretion by helping the post-translocational extracellular folding of several secreted proteins. The chain is Foldase protein PrsA from Caldanaerobacter subterraneus subsp. tengcongensis (strain DSM 15242 / JCM 11007 / NBRC 100824 / MB4) (Thermoanaerobacter tengcongensis).